We begin with the raw amino-acid sequence, 522 residues long: Cytochrome b mRNA maturase bI3 (522 aa).

Over 1–31 (MTIRKSNPYLSLVNSYLMDSPQPSSMNYWWN) the chain is Mitochondrial matrix. Positions 1 to 163 (MTIRKSNPYL…MPFMGGDLVP (163 aa)) are cytochrome b. Residues 32–52 (VGSLLGLCLVMQMASGMFLAM) form a helical membrane-spanning segment. Over 53–84 (HYSSSMELAFNSVEHMMRDVNAGWLMRYIHAN) the chain is Mitochondrial intermembrane. Residues 85–105 (GASFFFMCLYLHMGKALYYGS) traverse the membrane as a helical segment. Residues 106 to 110 (YKSPR) lie on the Mitochondrial matrix side of the membrane. Residues 111–131 (VLVWSMGVMMFMLTMATAFMG) form a helical membrane-spanning segment. Residues 132-154 (YCLVYGQMSHWGATVITNLLSAM) are Mitochondrial intermembrane-facing. Residues 155-175 (PFMGGDLVPLSIILSLYLLYI) form a helical membrane-spanning segment. The maturase stretch occupies residues 164–522 (LSIILSLYLL…PYMSWHQKEQ (359 aa)). Over 176 to 522 (SLKTFMKMIF…PYMSWHQKEQ (347 aa)) the chain is Mitochondrial matrix.

The protein in the N-terminal section; belongs to the cytochrome b family. It in the C-terminal section; belongs to the LAGLIDADG endonuclease family.

It localises to the mitochondrion inner membrane. In terms of biological role, mitochondrial mRNA maturase required for splicing of intron 3 of the cytochrome b (COB) gene, containing its own coding sequence. The polypeptide is Cytochrome b mRNA maturase bI3 (bI3) (Debaryomyces hansenii (strain ATCC 36239 / CBS 767 / BCRC 21394 / JCM 1990 / NBRC 0083 / IGC 2968) (Yeast)).